Reading from the N-terminus, the 76-residue chain is Exodeoxyribonuclease 7 small subunit (76 aa).

It belongs to the XseB family. In terms of assembly, heterooligomer composed of large and small subunits.

It localises to the cytoplasm. The catalysed reaction is Exonucleolytic cleavage in either 5'- to 3'- or 3'- to 5'-direction to yield nucleoside 5'-phosphates.. Bidirectionally degrades single-stranded DNA into large acid-insoluble oligonucleotides, which are then degraded further into small acid-soluble oligonucleotides. This is Exodeoxyribonuclease 7 small subunit from Bacillus mycoides (strain KBAB4) (Bacillus weihenstephanensis).